The sequence spans 315 residues: Replication factor C small subunit (315 aa).

Position 43–50 (43–50) interacts with ATP; sequence GSPGVGKT.

The protein belongs to the activator 1 small subunits family. RfcS subfamily. Heteromultimer composed of small subunits (RfcS) and large subunits (RfcL).

Functionally, part of the RFC clamp loader complex which loads the PCNA sliding clamp onto DNA. The sequence is that of Replication factor C small subunit from Methanococcus maripaludis (strain DSM 14266 / JCM 13030 / NBRC 101832 / S2 / LL).